Reading from the N-terminus, the 244-residue chain is 6-carboxyhexanoate--CoA ligase (244 aa).

The protein belongs to the BioW family. In terms of assembly, homodimer. It depends on Mg(2+) as a cofactor.

It catalyses the reaction heptanedioate + ATP + CoA = 6-carboxyhexanoyl-CoA + AMP + diphosphate. Its pathway is metabolic intermediate metabolism; pimeloyl-CoA biosynthesis; pimeloyl-CoA from pimelate: step 1/1. Its function is as follows. Catalyzes the transformation of pimelate into pimeloyl-CoA with concomitant hydrolysis of ATP to AMP. This is 6-carboxyhexanoate--CoA ligase from Methanococcus maripaludis (strain DSM 14266 / JCM 13030 / NBRC 101832 / S2 / LL).